We begin with the raw amino-acid sequence, 96 residues long: Small ribosomal subunit protein bS6 (96 aa).

It belongs to the bacterial ribosomal protein bS6 family.

Its function is as follows. Binds together with bS18 to 16S ribosomal RNA. The polypeptide is Small ribosomal subunit protein bS6 (Bacillus thuringiensis subsp. konkukian (strain 97-27)).